Reading from the N-terminus, the 143-residue chain is Large ribosomal subunit protein uL11 (143 aa).

Belongs to the universal ribosomal protein uL11 family. In terms of assembly, part of the ribosomal stalk of the 50S ribosomal subunit. Interacts with L10 and the large rRNA to form the base of the stalk. L10 forms an elongated spine to which L12 dimers bind in a sequential fashion forming a multimeric L10(L12)X complex. In terms of processing, one or more lysine residues are methylated.

Forms part of the ribosomal stalk which helps the ribosome interact with GTP-bound translation factors. The polypeptide is Large ribosomal subunit protein uL11 (Cellvibrio japonicus (strain Ueda107) (Pseudomonas fluorescens subsp. cellulosa)).